The sequence spans 176 residues: MQGSIDSHIEGIVQNILEDSVGTKGEGVYLVAMTVKGSAVHRKIEVILDADSGVRIDQCSFFARRIRERLEEDEALSGTMGEDFDLVVGSPGLGEPLVLRRQYGRHVGRLLRVWYRDTEGVEHEVAGHLQAVSLTEGGGSITLKPQTAKKKGRQEETEDMTLELDAVSRAVPEAEI.

A disordered region spans residues 143–176 (LKPQTAKKKGRQEETEDMTLELDAVSRAVPEAEI).

This sequence belongs to the RimP family.

The protein resides in the cytoplasm. In terms of biological role, required for maturation of 30S ribosomal subunits. In Chlorobium luteolum (strain DSM 273 / BCRC 81028 / 2530) (Pelodictyon luteolum), this protein is Ribosome maturation factor RimP.